A 120-amino-acid polypeptide reads, in one-letter code: Large ribosomal subunit protein uL22 (120 aa).

It belongs to the universal ribosomal protein uL22 family. Part of the 50S ribosomal subunit.

Its function is as follows. This protein binds specifically to 23S rRNA; its binding is stimulated by other ribosomal proteins, e.g. L4, L17, and L20. It is important during the early stages of 50S assembly. It makes multiple contacts with different domains of the 23S rRNA in the assembled 50S subunit and ribosome. In terms of biological role, the globular domain of the protein is located near the polypeptide exit tunnel on the outside of the subunit, while an extended beta-hairpin is found that lines the wall of the exit tunnel in the center of the 70S ribosome. This is Large ribosomal subunit protein uL22 from Corynebacterium urealyticum (strain ATCC 43042 / DSM 7109).